Consider the following 556-residue polypeptide: Urocanate hydratase (556 aa).

NAD(+) is bound by residues 52–53 (GG), Gln130, 176–178 (GMG), Glu196, Arg201, 242–243 (NA), 263–267 (QTSAH), 273–274 (YL), and Tyr322. Cys410 is an active-site residue. Gly492 serves as a coordination point for NAD(+).

It belongs to the urocanase family. Requires NAD(+) as cofactor.

The protein resides in the cytoplasm. It carries out the reaction 4-imidazolone-5-propanoate = trans-urocanate + H2O. It participates in amino-acid degradation; L-histidine degradation into L-glutamate; N-formimidoyl-L-glutamate from L-histidine: step 2/3. Its function is as follows. Catalyzes the conversion of urocanate to 4-imidazolone-5-propionate. The polypeptide is Urocanate hydratase (Shewanella oneidensis (strain ATCC 700550 / JCM 31522 / CIP 106686 / LMG 19005 / NCIMB 14063 / MR-1)).